Here is a 91-residue protein sequence, read N- to C-terminus: Small ribosomal subunit protein uS19 (91 aa).

It belongs to the universal ribosomal protein uS19 family.

In terms of biological role, protein S19 forms a complex with S13 that binds strongly to the 16S ribosomal RNA. The polypeptide is Small ribosomal subunit protein uS19 (Prochlorococcus marinus (strain MIT 9303)).